Reading from the N-terminus, the 305-residue chain is Phosphoribosylaminoimidazole-succinocarboxamide synthase (305 aa).

Belongs to the SAICAR synthetase family.

The catalysed reaction is 5-amino-1-(5-phospho-D-ribosyl)imidazole-4-carboxylate + L-aspartate + ATP = (2S)-2-[5-amino-1-(5-phospho-beta-D-ribosyl)imidazole-4-carboxamido]succinate + ADP + phosphate + 2 H(+). The protein operates within purine metabolism; IMP biosynthesis via de novo pathway; 5-amino-1-(5-phospho-D-ribosyl)imidazole-4-carboxamide from 5-amino-1-(5-phospho-D-ribosyl)imidazole-4-carboxylate: step 1/2. In Tropheryma whipplei (strain TW08/27) (Whipple's bacillus), this protein is Phosphoribosylaminoimidazole-succinocarboxamide synthase.